The following is a 158-amino-acid chain: MSKESRIFIEISENIIDLNYWYKIVSDDSSGATSSFLGTTRNEFKGKSVERLEYETYEPMAIKEIEKICKTILNGFENDIKKIGIVHRIGNVPVGESSILIVISSGHRKSSLEAVHYAIDTIKSTVPIWKKEFYTDGSENQWKGNCESCHFNNNNHPH.

Residues 107 to 108 (HR), lysine 123, and 130 to 132 (KKE) each bind substrate.

This sequence belongs to the MoaE family. MOCS2B subfamily. Heterotetramer; composed of 2 small (mocs2s) and 2 large (mocs2l) subunits.

It localises to the cytoplasm. It catalyses the reaction 2 [molybdopterin-synthase sulfur-carrier protein]-C-terminal-Gly-aminoethanethioate + cyclic pyranopterin phosphate + H2O = molybdopterin + 2 [molybdopterin-synthase sulfur-carrier protein]-C-terminal Gly-Gly + 2 H(+). It functions in the pathway cofactor biosynthesis; molybdopterin biosynthesis. In terms of biological role, catalytic subunit of the molybdopterin synthase complex, a complex that catalyzes the conversion of precursor Z into molybdopterin. Acts by mediating the incorporation of 2 sulfur atoms from thiocarboxylated mocs2s into precursor Z to generate a dithiolene group. The protein is Molybdopterin synthase catalytic subunit (mocs2l) of Dictyostelium discoideum (Social amoeba).